The sequence spans 456 residues: Decaprenyl-diphosphate synthase (456 aa).

The isopentenyl diphosphate site is built by Lys-183, Arg-186, and His-216. Mg(2+)-binding residues include Asp-223 and Asp-227. Arg-233 serves as a coordination point for isopentenyl diphosphate.

The protein belongs to the FPP/GGPP synthase family. Requires Mg(2+) as cofactor.

It localises to the mitochondrion. It carries out the reaction 7 isopentenyl diphosphate + (2E,6E)-farnesyl diphosphate = all-trans-decaprenyl diphosphate + 7 diphosphate. Its pathway is cofactor biosynthesis; ubiquinone biosynthesis. Supplies decaprenyl diphosphate, the precursor for the side chain of the isoprenoid quinones ubiquinone-10. The polypeptide is Decaprenyl-diphosphate synthase (coq1) (Dictyostelium discoideum (Social amoeba)).